Reading from the N-terminus, the 446-residue chain is MVGVSNWAAPSTATPVHATVTVPGSKSQTNRALVLAALAAREGSSRISGALRSRDTDLMIGALETLGLSVAASDSDPADLTVSGTLAPAAEARVDCGLAGTVLRFVPPIAALSAQTVTFDGDEQARSRPIAPLLDGLRTLGVDIDGDGLPFAVRGTGTVAGGTVEIDASGSSQFVSGLLLSGAAFTDGLTIVHTGDSVPSAPHIAMTVSMLRDAGVEVDDSAPDRWRVSPGPIGARDWVIEPDLSNSVPFLAAAVVSGGAVRITGWPTVSIQPADTILKILAGLNGEVRKGSSYLEVQGATNYGGIDVDLRDVGELAPSVAAMAALADPGSVSRLRGIAHLRGHETDRLAALSTEINGIGGQCEETEDGLVITAREMHGGTWSSYADHRMATAGAIIGLRVPGIEVEDIGTTAKTLPDFPQLWADMLGGQTDDLQQGPSARETPGR.

Residues Lys-26, Ser-27, and Arg-31 each coordinate 3-phosphoshikimate. Lys-26 provides a ligand contact to phosphoenolpyruvate. Residues Gly-100 and Arg-128 each contribute to the phosphoenolpyruvate site. Ser-171, Ser-172, Gln-173, Ser-200, Glu-315, and His-344 together coordinate 3-phosphoshikimate. Position 173 (Gln-173) interacts with phosphoenolpyruvate. The active-site Proton acceptor is the Glu-315. The phosphoenolpyruvate site is built by Arg-348, Arg-389, and Lys-414.

This sequence belongs to the EPSP synthase family. In terms of assembly, monomer.

It localises to the cytoplasm. The enzyme catalyses 3-phosphoshikimate + phosphoenolpyruvate = 5-O-(1-carboxyvinyl)-3-phosphoshikimate + phosphate. It participates in metabolic intermediate biosynthesis; chorismate biosynthesis; chorismate from D-erythrose 4-phosphate and phosphoenolpyruvate: step 6/7. In terms of biological role, catalyzes the transfer of the enolpyruvyl moiety of phosphoenolpyruvate (PEP) to the 5-hydroxyl of shikimate-3-phosphate (S3P) to produce enolpyruvyl shikimate-3-phosphate and inorganic phosphate. In Mycolicibacterium gilvum (strain PYR-GCK) (Mycobacterium gilvum (strain PYR-GCK)), this protein is 3-phosphoshikimate 1-carboxyvinyltransferase.